Consider the following 404-residue polypeptide: Probable oxalate decarboxylase ARB_04859 (404 aa).

An N-terminal signal peptide occupies residues 1 to 17; the sequence is MKYSAVLVAALAAIADA. A Cupin type-1 1 domain is found at 74 to 215; sequence FSLSKTRMLY…NFGVPPSTFD (142 aa). His-117, His-119, Glu-123, and His-162 together coordinate Mn(2+). Residues Asn-226 and Asn-244 are each glycosylated (N-linked (GlcNAc...) asparagine). Residues 249–393 enclose the Cupin type-1 2 domain; it reads FHISNAPEIQ…AINVPIEVIE (145 aa). Mn(2+) contacts are provided by His-296, His-298, Glu-303, and His-342. Asn-346 carries an N-linked (GlcNAc...) asparagine glycan. Glu-357 acts as the Proton donor in catalysis.

It depends on Mn(2+) as a cofactor.

It localises to the secreted. It catalyses the reaction oxalate + H(+) = formate + CO2. Functionally, converts oxalate to formate and CO(2) in an O(2)-dependent reaction. Can also catalyze minor side reactions: oxalate oxidation to produce H(2)O(2), and oxalate-dependent, H(2)O(2)-independent dye oxidations. The chain is Probable oxalate decarboxylase ARB_04859 from Arthroderma benhamiae (strain ATCC MYA-4681 / CBS 112371) (Trichophyton mentagrophytes).